Consider the following 623-residue polypeptide: MAPKITSELLRQLRQAMRNLEYVTEPIQAYIIPSGDAHQSEYIAPCDCRRAFVSGFDGSAGTAIVTEEHAAMWTDGRYFLQAAKQMDSNWTLMKMGLKDTPTQEDWLVSVLPEGSRVGVDPLIIPTDYWKKMAKVLRSAGHHLIPVKDNLVDKIWTDRPERPCKPLITLGLDYTGISWKDKVADLRLKMAERNVVWFVVTALDEIAWLFNLRGSDVEHNPVFFSYAILGLETIMLFIDGDRIDAPIVKEHLLLDLGLEAEYRIQVLPYKSILSELKILCASLSPREKVWVSDKASYAVSEAIPKDHRCCMPYTPICIAKAVKNSAESEGMRRAHIKDAVALCELFNWLEKEVPKGGVTEISAANKAEEFRRQQADFVDLSFPTISSTGPNGAIIHYAPVPETNRTLSLDEVYLIDSGAQYKDGTTDVTRTMHFGTPTAYEKECFTYVLKGHIAVSAAVFPTGTKGHLLDSFARSALWDSGLDYLHGTGHGVGSFLNVHEGPCGISYKTFSDEPLEAGMIVTDEPGYYEDGAFGIRIENVVLVVPVKTKYNFNNRGSLTFEPLTLVPIQTKMIDVDSLTDKECDWLNSYHLTCRDVIGKELQKQGRQEALEWLIRETQPISKQP.

Arg77 provides a ligand contact to a peptide. Lys304 carries the N6-acetyllysine modification. An a peptide-binding site is contributed by His395. Mn(2+)-binding residues include Asp415, Asp426, and His489. A peptide contacts are provided by His489, His498, and Glu523. Residues Glu523 and Glu537 each coordinate Mn(2+).

Belongs to the peptidase M24B family. Homodimer. Mn(2+) is required as a cofactor.

It localises to the cytoplasm. The protein localises to the cytosol. The enzyme catalyses Release of any N-terminal amino acid, including proline, that is linked to proline, even from a dipeptide or tripeptide.. Its function is as follows. Metalloaminopeptidase that catalyzes the removal of a penultimate prolyl residue from the N-termini of peptides, such as Arg-Pro-Pro. Contributes to the degradation of bradykinin. This chain is Xaa-Pro aminopeptidase 1 (XPNPEP1), found in Bos taurus (Bovine).